Here is a 312-residue protein sequence, read N- to C-terminus: Molybdenum cofactor biosynthesis bifunctional protein (312 aa).

The tract at residues 1–155 (MEFTHLDENG…GGKSSAAEYH (155 aa)) is molybdenum cofactor biosynthesis protein C. Substrate-binding positions include 74 to 76 (LCH) and 110 to 111 (ME). The active site involves Asp125. The interval 156–312 (PRTAILVMSD…FPMLKGDGHA (157 aa)) is molybdenum cofactor biosynthesis protein B.

It in the N-terminal section; belongs to the MoaC family. This sequence in the C-terminal section; belongs to the MoaB/Mog family.

It catalyses the reaction (8S)-3',8-cyclo-7,8-dihydroguanosine 5'-triphosphate = cyclic pyranopterin phosphate + diphosphate. It functions in the pathway cofactor biosynthesis; molybdopterin biosynthesis. In terms of biological role, catalyzes the conversion of (8S)-3',8-cyclo-7,8-dihydroguanosine 5'-triphosphate to cyclic pyranopterin monophosphate (cPMP). This Chlorobaculum tepidum (strain ATCC 49652 / DSM 12025 / NBRC 103806 / TLS) (Chlorobium tepidum) protein is Molybdenum cofactor biosynthesis bifunctional protein (moaCB).